Reading from the N-terminus, the 163-residue chain is SsrA-binding protein (163 aa).

The protein belongs to the SmpB family.

The protein localises to the cytoplasm. In terms of biological role, required for rescue of stalled ribosomes mediated by trans-translation. Binds to transfer-messenger RNA (tmRNA), required for stable association of tmRNA with ribosomes. tmRNA and SmpB together mimic tRNA shape, replacing the anticodon stem-loop with SmpB. tmRNA is encoded by the ssrA gene; the 2 termini fold to resemble tRNA(Ala) and it encodes a 'tag peptide', a short internal open reading frame. During trans-translation Ala-aminoacylated tmRNA acts like a tRNA, entering the A-site of stalled ribosomes, displacing the stalled mRNA. The ribosome then switches to translate the ORF on the tmRNA; the nascent peptide is terminated with the 'tag peptide' encoded by the tmRNA and targeted for degradation. The ribosome is freed to recommence translation, which seems to be the essential function of trans-translation. The chain is SsrA-binding protein from Shewanella putrefaciens (strain CN-32 / ATCC BAA-453).